The chain runs to 32 residues: Secreted proteinase (32 aa).

The tract at residues 1–32 (DTANDPKYGSQYAPQKVNADVDQGVXXXHPEL) is disordered. Catalysis depends on aspartate 22, which acts as the Charge relay system.

Belongs to the peptidase S8 family.

The protein resides in the secreted. This Haloferax mediterranei (Halobacterium mediterranei) protein is Secreted proteinase.